Consider the following 152-residue polypeptide: Transcriptional regulator MraZ (152 aa).

2 SpoVT-AbrB domains span residues 5-52 (ASAI…PIHE) and 81-124 (AHEV…DEQS).

Belongs to the MraZ family. In terms of assembly, forms oligomers.

Its subcellular location is the cytoplasm. The protein localises to the nucleoid. The protein is Transcriptional regulator MraZ of Shewanella baltica (strain OS155 / ATCC BAA-1091).